The following is a 498-amino-acid chain: Swainsonine transporter swnT (498 aa).

The segment covering 1-10 has biased composition (basic and acidic residues); it reads MSLRNDEQTE. The segment at 1–21 is disordered; the sequence is MSLRNDEQTEKGAVVGKVDSQ. Transmembrane regions (helical) follow at residues 42–64, 79–99, 126–146, 167–187, and 193–213; these read LSAI…VLGT, LAMA…ISAI, AMIS…AVPV, FVVF…EYFL, and ALLL…FATA. Asn-227 and Asn-242 each carry an N-linked (GlcNAc...) asparagine glycan. Transmembrane regions (helical) follow at residues 272–292, 316–336, 370–390, 398–418, 436–456, and 469–489; these read LIWT…AVLV, AAAI…VWSI, PIWS…LYLA, LIAT…ILVL, GFMA…FYCF, and YVSA…FLYA.

It belongs to the amino acid-polyamine-organocation (APC) superfamily. Amino acid/choline transporter (ACT) (TC 2.A.3.4) family.

The protein resides in the membrane. In terms of biological role, transmembrane transporter; part of the gene cluster that mediates the biosynthesis of swainsonine, a cytotoxic fungal alkaloid and a potential cancer therapy drug. Does not mediate the secretion of SW and the exact role of swnT in SW biosynthesis remains to be determined. This Arthroderma benhamiae (strain ATCC MYA-4681 / CBS 112371) (Trichophyton mentagrophytes) protein is Swainsonine transporter swnT.